The chain runs to 361 residues: MKIDILSLFPGYFDGPLQTSILGRAIKQRLLDVQLTNLRDFGLGKWKQVDDTPFSGGGMLLMAEPVTSAIRSVRKENSKVIYLSPQGALLTAEKSRELAAASHLILLCGHYEGIDERAIESEVDEEISIGDYVLTNGGIAALVLIDAVSRFIPGVLGNQESAERDSLENGLLEGPQYTRPREFEGKEVPEVLLQGDHKAISQWRLEQSERRTYERRPDLYLNYLYKRSIDHKFDEETTTNRDHFKCDKISVVLEVNKLKRAKNFYCKVFGLDAMSCENKFCLPHEGKTIFWLREVQAEKKNIVTLSLSLDCACEEDFCYLLRRWELFGGKLLEKQADEHAVWALAQDLDGHAWIFSWHRMK.

S-adenosyl-L-methionine is bound by residues glycine 109 and 129 to 134 (IGDYVL).

It belongs to the RNA methyltransferase TrmD family. As to quaternary structure, homodimer.

It localises to the cytoplasm. It carries out the reaction guanosine(37) in tRNA + S-adenosyl-L-methionine = N(1)-methylguanosine(37) in tRNA + S-adenosyl-L-homocysteine + H(+). Functionally, specifically methylates guanosine-37 in various tRNAs. The sequence is that of tRNA (guanine-N(1)-)-methyltransferase (trmD) from Chlamydia pneumoniae (Chlamydophila pneumoniae).